Here is a 354-residue protein sequence, read N- to C-terminus: Fructose-bisphosphate aldolase (354 aa).

A D-glyceraldehyde 3-phosphate-binding site is contributed by serine 61. Aspartate 104 (proton donor) is an active-site residue. Histidine 105, aspartate 139, glutamate 169, and histidine 221 together coordinate Zn(2+). Glycine 222 contacts dihydroxyacetone phosphate. Histidine 260 is a binding site for Zn(2+). Residues 261–263 and 282–285 contribute to the dihydroxyacetone phosphate site; these read GGS and NIDT.

The protein belongs to the class II fructose-bisphosphate aldolase family. Homodimer. Requires Zn(2+) as cofactor.

It catalyses the reaction beta-D-fructose 1,6-bisphosphate = D-glyceraldehyde 3-phosphate + dihydroxyacetone phosphate. It functions in the pathway carbohydrate degradation; glycolysis; D-glyceraldehyde 3-phosphate and glycerone phosphate from D-glucose: step 4/4. Its function is as follows. Catalyzes the aldol condensation of dihydroxyacetone phosphate (DHAP or glycerone-phosphate) with glyceraldehyde 3-phosphate (G3P) to form fructose 1,6-bisphosphate (FBP) in gluconeogenesis and the reverse reaction in glycolysis. This chain is Fructose-bisphosphate aldolase (fba), found in Campylobacter jejuni subsp. jejuni serotype O:2 (strain ATCC 700819 / NCTC 11168).